The following is a 108-amino-acid chain: Glutaredoxin 4 (108 aa).

A Glutaredoxin domain is found at 4 to 106 (FQKIKKQIQD…KLILKVKKKY (103 aa)). Lys-21 is a binding site for glutathione. Cys-29 provides a ligand contact to [2Fe-2S] cluster. Residues Arg-58, Phe-70, and 83 to 84 (CS) each bind glutathione.

It belongs to the glutaredoxin family. Monothiol subfamily. Homodimer.

It is found in the cytoplasm. Its function is as follows. Monothiol glutaredoxin involved in the biogenesis of iron-sulfur clusters. This Buchnera aphidicola subsp. Acyrthosiphon pisum (strain APS) (Acyrthosiphon pisum symbiotic bacterium) protein is Glutaredoxin 4 (grxD).